Consider the following 930-residue polypeptide: uncharacterized protein (930 aa).

The first 20 residues, 1–20, serve as a signal peptide directing secretion; the sequence is MPSFVLWTFHLCSQWFQGLT. Asn137, Asn146, Asn164, Asn210, Asn257, Asn628, Asn717, and Asn799 each carry an N-linked (GlcNAc...) asparagine glycan.

It is found in the secreted. This is an uncharacterized protein from Arthroderma benhamiae (strain ATCC MYA-4681 / CBS 112371) (Trichophyton mentagrophytes).